The following is a 266-amino-acid chain: Killer cell lectin-like receptor 8 (266 aa).

At methionine 1–glutamine 44 the chain is on the cytoplasmic side. The helical; Signal-anchor for type II membrane protein transmembrane segment at leucine 45 to threonine 66 threads the bilayer. The Extracellular portion of the chain corresponds to lysine 67–aspartate 266. N-linked (GlcNAc...) asparagine glycans are attached at residues asparagine 87 and asparagine 104. The 119-residue stretch at glycine 143–leucine 261 folds into the C-type lectin domain. Cystine bridges form between cysteine 149–cysteine 154, cysteine 167–cysteine 255, cysteine 171–cysteine 257, and cysteine 236–cysteine 249.

In terms of assembly, homodimer; disulfide-linked. Interacts with the adapter protein TYROBP/DAP12; the interaction leads to natural killer cell activation.

The protein resides in the cell membrane. Its function is as follows. Receptor on natural killer (NK) cells for class I MHC. The protein is Killer cell lectin-like receptor 8 (Klra8) of Mus musculus (Mouse).